The chain runs to 413 residues: Serine hydroxymethyltransferase (413 aa).

Residues Leu-119 and 123-125 (GHL) contribute to the (6S)-5,6,7,8-tetrahydrofolate site. Lys-228 carries the post-translational modification N6-(pyridoxal phosphate)lysine. Residue Glu-243 coordinates (6S)-5,6,7,8-tetrahydrofolate.

The protein belongs to the SHMT family. In terms of assembly, homodimer. Pyridoxal 5'-phosphate serves as cofactor.

It is found in the cytoplasm. It carries out the reaction (6R)-5,10-methylene-5,6,7,8-tetrahydrofolate + glycine + H2O = (6S)-5,6,7,8-tetrahydrofolate + L-serine. The protein operates within one-carbon metabolism; tetrahydrofolate interconversion. It functions in the pathway amino-acid biosynthesis; glycine biosynthesis; glycine from L-serine: step 1/1. Functionally, catalyzes the reversible interconversion of serine and glycine with tetrahydrofolate (THF) serving as the one-carbon carrier. This reaction serves as the major source of one-carbon groups required for the biosynthesis of purines, thymidylate, methionine, and other important biomolecules. Also exhibits THF-independent aldolase activity toward beta-hydroxyamino acids, producing glycine and aldehydes, via a retro-aldol mechanism. The sequence is that of Serine hydroxymethyltransferase from Desulforamulus reducens (strain ATCC BAA-1160 / DSM 100696 / MI-1) (Desulfotomaculum reducens).